The primary structure comprises 913 residues: Polyribonucleotide nucleotidyltransferase (913 aa).

The interval 407 to 427 is disordered; that stretch reads YMHNYEMPPYSTGETGRVGSP. Mg(2+)-binding residues include D521 and D527. One can recognise a KH domain in the interval 587–646; that stretch reads PRIITTSVPVEKIGEVIGPKGKMINQIQEDTGAEIAIEDDGTVFISSEGGEAAEKAKAII. The S1 motif domain maps to 658-730; it reads GETYNGKVVK…DRGKISLAIP (73 aa). Residues 727–913 form a disordered region; it reads LAIPGFEDQE…VRRDFDPFED (187 aa). 3 stretches are compositionally biased toward basic and acidic residues: residues 742-789, 797-865, and 872-898; these read SRGD…RRSD, DRPR…DRRG, and RGSD…ERTE.

The protein belongs to the polyribonucleotide nucleotidyltransferase family. It depends on Mg(2+) as a cofactor.

It is found in the cytoplasm. It carries out the reaction RNA(n+1) + phosphate = RNA(n) + a ribonucleoside 5'-diphosphate. Involved in mRNA degradation. Catalyzes the phosphorolysis of single-stranded polyribonucleotides processively in the 3'- to 5'-direction. This Bifidobacterium longum (strain DJO10A) protein is Polyribonucleotide nucleotidyltransferase.